Consider the following 341-residue polypeptide: Two-component response regulator ORR30 (341 aa).

Residues 12–127 enclose the Response regulatory domain; it reads RVLVIDDDCS…ELSNIWQHIF (116 aa). At Asp63 the chain carries 4-aspartylphosphate. The HTH myb-type domain maps to 195–254; sequence DLGKSRLTWTTQLHRQFIAAVNHLGEDKAVPKKILGIMKVKHLTREQVASHLQKYRMQLK. The segment at residues 225 to 250 is a DNA-binding region (H-T-H motif); sequence PKKILGIMKVKHLTREQVASHLQKYR.

It belongs to the ARR family. Type-B subfamily. Post-translationally, two-component system major event consists of a His-to-Asp phosphorelay between a sensor histidine kinase (HK) and a response regulator (RR). In plants, the His-to-Asp phosphorelay involves an additional intermediate named Histidine-containing phosphotransfer protein (HPt). This multistep phosphorelay consists of a His-Asp-His-Asp sequential transfer of a phosphate group between first a His and an Asp of the HK protein, followed by the transfer to a conserved His of the HPt protein and finally the transfer to an Asp in the receiver domain of the RR protein.

The protein resides in the nucleus. Its function is as follows. Transcriptional activator that acts as a floral inducer to promote short-day (SD) flowering pathway. Activates HD3A and other FT-like genes independently from HD1. May also activate MADS-box transcription factors involved in flowering regulation. Functions as a response regulator involved in His-to-Asp phosphorelay signal transduction system. Phosphorylation of the Asp residue in the receiver domain activates the ability of the protein to promote the transcription of target genes. May directly activate some type-A response regulators in response to cytokinins. The chain is Two-component response regulator ORR30 from Oryza sativa subsp. japonica (Rice).